We begin with the raw amino-acid sequence, 209 residues long: Cytidylyl-2-hydroxypropylphosphonate hydrolase (209 aa).

Residues N111, D127, E129, and D131 each coordinate a divalent metal cation. K144 (proton donor) is an active-site residue. A divalent metal cation is bound at residue D145.

Belongs to the FomD family. In terms of assembly, monomer in solution. The cofactor is Mn(2+). It depends on Co(2+) as a cofactor.

It carries out the reaction cytidine 5'-({hydroxy[(S)-2-hydroxypropyl]phosphonoyl}phosphate) + H2O = (S)-2-hydroxypropylphosphonate + CMP + H(+). It participates in antibiotic biosynthesis; fosfomycin biosynthesis. Its activity is regulated as follows. Hydrolysis of (S)-HPP-CMP is inhibited by CDP. Involved in fosfomycin biosynthesis. Catalyzes the hydrolysis of cytidylyl (S)-2-hydroxypropylphosphonate ((S)-HPP-CMP) to give (S)-2-hydroxypropylphosphonate ((S)-HPP) and CMP. Can also hydrolyze (R)-HPP-CMP and cytidylyl 2-hydroxyethylphosphonate (HEP-CMP), which is a biosynthetic intermediate before C-methylation, but the catalytic efficiency is much higher with (S)-HPP-CMP. The protein is Cytidylyl-2-hydroxypropylphosphonate hydrolase of Streptomyces wedmorensis.